We begin with the raw amino-acid sequence, 300 residues long: Ribonuclease HIII (300 aa).

The 218-residue stretch at 83 to 300 (IPIIGSDEVG…THKAQALLTK (218 aa)) folds into the RNase H type-2 domain. A divalent metal cation contacts are provided by aspartate 89, glutamate 90, and aspartate 194.

The protein belongs to the RNase HII family. RnhC subfamily. It depends on Mn(2+) as a cofactor. Mg(2+) is required as a cofactor.

It localises to the cytoplasm. It carries out the reaction Endonucleolytic cleavage to 5'-phosphomonoester.. In terms of biological role, endonuclease that specifically degrades the RNA of RNA-DNA hybrids. This chain is Ribonuclease HIII, found in Streptococcus pyogenes serotype M49 (strain NZ131).